A 317-amino-acid chain; its full sequence is Sulfate adenylyltransferase subunit 2 (317 aa).

Disordered regions lie at residues 1 to 21 and 298 to 317; these read MPDSRPDTELSNPQSAKAPLD and RAIDRDQSGSMEKKKREGYF.

The protein belongs to the PAPS reductase family. CysD subfamily. In terms of assembly, heterodimer composed of CysD, the smaller subunit, and CysN.

The catalysed reaction is sulfate + ATP + H(+) = adenosine 5'-phosphosulfate + diphosphate. It participates in sulfur metabolism; hydrogen sulfide biosynthesis; sulfite from sulfate: step 1/3. With CysN forms the ATP sulfurylase (ATPS) that catalyzes the adenylation of sulfate producing adenosine 5'-phosphosulfate (APS) and diphosphate, the first enzymatic step in sulfur assimilation pathway. APS synthesis involves the formation of a high-energy phosphoric-sulfuric acid anhydride bond driven by GTP hydrolysis by CysN coupled to ATP hydrolysis by CysD. The chain is Sulfate adenylyltransferase subunit 2 from Rhizobium etli (strain ATCC 51251 / DSM 11541 / JCM 21823 / NBRC 15573 / CFN 42).